The chain runs to 387 residues: Eukaryotic translation initiation factor 3 subunit M (387 aa).

The 160-residue stretch at 181–340 (LSSKVMIELL…RKVHISSTMH (160 aa)) folds into the PCI domain.

It belongs to the eIF-3 subunit M family. Component of the eukaryotic translation initiation factor 3 (eIF-3) complex. The eIF-3 complex interacts with pix.

The protein localises to the cytoplasm. Its subcellular location is the golgi apparatus. Component of the eukaryotic translation initiation factor 3 (eIF-3) complex, which is involved in protein synthesis of a specialized repertoire of mRNAs and, together with other initiation factors, stimulates binding of mRNA and methionyl-tRNAi to the 40S ribosome. The eIF-3 complex specifically targets and initiates translation of a subset of mRNAs involved in cell proliferation. This chain is Eukaryotic translation initiation factor 3 subunit M, found in Drosophila persimilis (Fruit fly).